The following is a 90-amino-acid chain: Small ribosomal subunit protein bS16 (90 aa).

This sequence belongs to the bacterial ribosomal protein bS16 family.

This Geobacillus thermodenitrificans (strain NG80-2) protein is Small ribosomal subunit protein bS16.